Consider the following 484-residue polypeptide: Hexokinase-2 (484 aa).

The 447-residue stretch at 21–467 (PQLLEALKPI…SGVGAAVIAA (447 aa)) folds into the Hexokinase domain. Positions 75–208 (TGKETGSYLA…GVPIDVVALI (134 aa)) are hexokinase small subdomain. The tract at residues 209-456 (NDTTGTLVAS…DPIIIVPAED (248 aa)) is hexokinase large subdomain.

The protein belongs to the hexokinase family. In terms of assembly, monomer.

Its subcellular location is the cytoplasm. The catalysed reaction is a D-hexose + ATP = a D-hexose 6-phosphate + ADP + H(+). It catalyses the reaction D-fructose + ATP = D-fructose 6-phosphate + ADP + H(+). It carries out the reaction D-glucose + ATP = D-glucose 6-phosphate + ADP + H(+). It functions in the pathway carbohydrate metabolism; hexose metabolism. It participates in carbohydrate degradation; glycolysis; D-glyceraldehyde 3-phosphate and glycerone phosphate from D-glucose: step 1/4. Catalyzes the phosphorylation of hexose, such as D-glucose and D-fructose, to hexose 6-phosphate (D-glucose 6-phosphate and D-fructose 6-phosphate, respectively). Mediates the initial step of glycolysis by catalyzing phosphorylation of D-glucose to D-glucose 6-phosphate. This chain is Hexokinase-2 (HXK2), found in Candida albicans (strain SC5314 / ATCC MYA-2876) (Yeast).